We begin with the raw amino-acid sequence, 250 residues long: MGVAIDKCETRPANIEAILSGLDRYNPETTTVFQDYVVQQCEDRTFDCYANLALLKLYQFNPHLLQPETVTNILVKALTVFPSPAFSLCLALLPAYTQPFPSSEAEATAAQMSDFVESVQKLARLSSLLESAQYAQFWSTLNSDDLYADLVADVAGFEELVRIRIAVEVGKAFREVNAEVLEQWLDVRNSEALEKFVTEVCSWEVDKSGSATVVKVPTNKENEARSEVKSERVGVDMFGRVIRRGFEQAA.

The 184-residue stretch at 46–229 folds into the PCI domain; sequence FDCYANLALL…KENEARSEVK (184 aa).

The protein belongs to the eIF-3 subunit K family. As to quaternary structure, component of the eukaryotic translation initiation factor 3 (eIF-3) complex.

The protein localises to the cytoplasm. Component of the eukaryotic translation initiation factor 3 (eIF-3) complex, which is involved in protein synthesis of a specialized repertoire of mRNAs and, together with other initiation factors, stimulates binding of mRNA and methionyl-tRNAi to the 40S ribosome. The eIF-3 complex specifically targets and initiates translation of a subset of mRNAs involved in cell proliferation. In Emericella nidulans (strain FGSC A4 / ATCC 38163 / CBS 112.46 / NRRL 194 / M139) (Aspergillus nidulans), this protein is Eukaryotic translation initiation factor 3 subunit K.